A 299-amino-acid chain; its full sequence is tRNA dimethylallyltransferase (299 aa).

11–18 (GPTAVGKT) is an ATP binding site. A substrate-binding site is contributed by 13–18 (TAVGKT). An interaction with substrate tRNA region spans residues 36–39 (DSQQ).

Belongs to the IPP transferase family. In terms of assembly, monomer. Mg(2+) is required as a cofactor.

It catalyses the reaction adenosine(37) in tRNA + dimethylallyl diphosphate = N(6)-dimethylallyladenosine(37) in tRNA + diphosphate. Catalyzes the transfer of a dimethylallyl group onto the adenine at position 37 in tRNAs that read codons beginning with uridine, leading to the formation of N6-(dimethylallyl)adenosine (i(6)A). The polypeptide is tRNA dimethylallyltransferase (Streptococcus pyogenes serotype M12 (strain MGAS2096)).